Here is a 1057-residue protein sequence, read N- to C-terminus: Carbamoyl phosphate synthase large chain (1057 aa).

Positions 1–401 (MPKRDDIQTI…SLLKAIRSLE (401 aa)) are carboxyphosphate synthetic domain. ATP-binding residues include Arg129, Arg169, Gly175, Gly176, Lys208, Ile210, Glu215, Gly241, Ile242, His243, Gln284, and Glu298. The ATP-grasp 1 domain occupies 133-327 (RTLMNDLNVP…IAKLAAKIAV (195 aa)). 3 residues coordinate Mg(2+): Gln284, Glu298, and Asn300. Residues Gln284, Glu298, and Asn300 each contribute to the Mn(2+) site. The segment at 402-546 (YGVHHLGLPN…YGTYEDENES (145 aa)) is oligomerization domain. Residues 547–929 (IVTDKEKILV…ALYKGLTGSG (383 aa)) are carbamoyl phosphate synthetic domain. Positions 671–861 (EALLREISVP…MAQLAMRAIM (191 aa)) constitute an ATP-grasp 2 domain. 10 residues coordinate ATP: Arg707, Arg746, Leu748, Glu752, Gly777, Val778, His779, Ser780, Gln820, and Glu832. Mg(2+)-binding residues include Gln820, Glu832, and Asn834. 3 residues coordinate Mn(2+): Gln820, Glu832, and Asn834. Positions 930–1057 (FEVKDHGTVL…ESMTFTMRNV (128 aa)) constitute an MGS-like domain. An allosteric domain region spans residues 930–1057 (FEVKDHGTVL…ESMTFTMRNV (128 aa)).

The protein belongs to the CarB family. In terms of assembly, composed of two chains; the small (or glutamine) chain promotes the hydrolysis of glutamine to ammonia, which is used by the large (or ammonia) chain to synthesize carbamoyl phosphate. Tetramer of heterodimers (alpha,beta)4. Mg(2+) is required as a cofactor. The cofactor is Mn(2+).

It carries out the reaction hydrogencarbonate + L-glutamine + 2 ATP + H2O = carbamoyl phosphate + L-glutamate + 2 ADP + phosphate + 2 H(+). The catalysed reaction is hydrogencarbonate + NH4(+) + 2 ATP = carbamoyl phosphate + 2 ADP + phosphate + 2 H(+). It functions in the pathway amino-acid biosynthesis; L-arginine biosynthesis; carbamoyl phosphate from bicarbonate: step 1/1. Its pathway is pyrimidine metabolism; UMP biosynthesis via de novo pathway; (S)-dihydroorotate from bicarbonate: step 1/3. Large subunit of the glutamine-dependent carbamoyl phosphate synthetase (CPSase). CPSase catalyzes the formation of carbamoyl phosphate from the ammonia moiety of glutamine, carbonate, and phosphate donated by ATP, constituting the first step of 2 biosynthetic pathways, one leading to arginine and/or urea and the other to pyrimidine nucleotides. The large subunit (synthetase) binds the substrates ammonia (free or transferred from glutamine from the small subunit), hydrogencarbonate and ATP and carries out an ATP-coupled ligase reaction, activating hydrogencarbonate by forming carboxy phosphate which reacts with ammonia to form carbamoyl phosphate. This chain is Carbamoyl phosphate synthase large chain, found in Staphylococcus epidermidis (strain ATCC 35984 / DSM 28319 / BCRC 17069 / CCUG 31568 / BM 3577 / RP62A).